The sequence spans 651 residues: ATP-dependent zinc metalloprotease FtsH (651 aa).

Topologically, residues 1–134 (MIVFATILFG…FTTDPQTAGP (134 aa)) are extracellular. The chain crosses the membrane as a helical span at residues 135-155 (WARAIAVMAPFVLILLLFFLM). Topologically, residues 156 to 651 (TRTGRSASQS…PAMSVNGHRG (496 aa)) are cytoplasmic. 229–236 (GPPGTGKT) provides a ligand contact to ATP. His-451 provides a ligand contact to Zn(2+). Residue Glu-452 is part of the active site. Positions 455 and 527 each coordinate Zn(2+).

This sequence in the central section; belongs to the AAA ATPase family. The protein in the C-terminal section; belongs to the peptidase M41 family. In terms of assembly, homohexamer. Requires Zn(2+) as cofactor.

The protein localises to the cell membrane. Its function is as follows. Acts as a processive, ATP-dependent zinc metallopeptidase for both cytoplasmic and membrane proteins. Plays a role in the quality control of integral membrane proteins. The sequence is that of ATP-dependent zinc metalloprotease FtsH from Rubrobacter xylanophilus (strain DSM 9941 / JCM 11954 / NBRC 16129 / PRD-1).